The following is a 590-amino-acid chain: Potassium-transporting ATPase potassium-binding subunit (590 aa).

The next 12 helical transmembrane spans lie at 3–23 (AFLLQLAIYLVVLLVLAKPLG), 63–83 (HYALAVIVVNVLGALAVYALQ), 134–154 (GLAVQNFLSAATGIAVVIALI), 177–197 (VYVLLPLSIIVSVFFVSQGVI), 284–304 (FVQMLAIFIIPAALCFTFGGM), 312–332 (WAVLAAMTVLFVVLAVFLAWA), 359–379 (FGIVASSLFATITTAASCGAV), 388–408 (ALGGFVPMFLMQLGEVVFGGV), 411–431 (GLYGMLVYAILAVFIAGLMIG), 451–471 (IAILVTPLLVLVGTAVAVVVT), 515–535 (LALGICMWLGRFWIIVPVLAM), and 558–578 (LFVVLLIGSVLLVGALTYIPA).

Belongs to the KdpA family. In terms of assembly, the system is composed of three essential subunits: KdpA, KdpB and KdpC.

The protein resides in the cell inner membrane. Its function is as follows. Part of the high-affinity ATP-driven potassium transport (or Kdp) system, which catalyzes the hydrolysis of ATP coupled with the electrogenic transport of potassium into the cytoplasm. This subunit binds the periplasmic potassium ions and delivers the ions to the membrane domain of KdpB through an intramembrane tunnel. This is Potassium-transporting ATPase potassium-binding subunit from Ralstonia pickettii (strain 12J).